The following is a 263-amino-acid chain: Phosphate import ATP-binding protein PstB (263 aa).

One can recognise an ABC transporter domain in the interval 16 to 258 (VTARNVTVSY…PRDTRTQDYI (243 aa)). Position 48–55 (48–55 (GPSGCGKS)) interacts with ATP.

This sequence belongs to the ABC transporter superfamily. Phosphate importer (TC 3.A.1.7) family. The complex is composed of two ATP-binding proteins (PstB), two transmembrane proteins (PstC and PstA) and a solute-binding protein (PstS).

Its subcellular location is the cell inner membrane. The catalysed reaction is phosphate(out) + ATP + H2O = ADP + 2 phosphate(in) + H(+). In terms of biological role, part of the ABC transporter complex PstSACB involved in phosphate import. Responsible for energy coupling to the transport system. This chain is Phosphate import ATP-binding protein PstB, found in Maricaulis maris (strain MCS10) (Caulobacter maris).